We begin with the raw amino-acid sequence, 396 residues long: Elongation factor Tu (396 aa).

The tr-type G domain maps to 10 to 206 (KPHVNIGTIG…AVDESVPDPI (197 aa)). The G1 stretch occupies residues 19 to 26 (GHVDHGKT). Residue 19-26 (GHVDHGKT) participates in GTP binding. Position 26 (threonine 26) interacts with Mg(2+). Residues 62-66 (GITIN) form a G2 region. Positions 83 to 86 (DAPG) are G3. Residues 83-87 (DAPGH) and 138-141 (NKSD) each bind GTP. The tract at residues 138-141 (NKSD) is G4. The interval 176–178 (SGL) is G5.

Belongs to the TRAFAC class translation factor GTPase superfamily. Classic translation factor GTPase family. EF-Tu/EF-1A subfamily. Monomer.

The protein resides in the cytoplasm. The enzyme catalyses GTP + H2O = GDP + phosphate + H(+). Functionally, GTP hydrolase that promotes the GTP-dependent binding of aminoacyl-tRNA to the A-site of ribosomes during protein biosynthesis. The sequence is that of Elongation factor Tu from Renibacterium salmoninarum (strain ATCC 33209 / DSM 20767 / JCM 11484 / NBRC 15589 / NCIMB 2235).